We begin with the raw amino-acid sequence, 239 residues long: Ribonuclease 3 (239 aa).

The 123-residue stretch at 11 to 133 folds into the RNase III domain; the sequence is HTAIQKKLGY…MFAAVSFDAD (123 aa). Residue Glu-46 participates in Mg(2+) binding. Asp-50 is a catalytic residue. Positions 119 and 122 each coordinate Mg(2+). Residue Glu-122 is part of the active site. The region spanning 160 to 230 is the DRBM domain; that stretch reads DGKTALQEAL…AKEALKWLEE (71 aa).

The protein belongs to the ribonuclease III family. As to quaternary structure, homodimer. It depends on Mg(2+) as a cofactor.

Its subcellular location is the cytoplasm. It carries out the reaction Endonucleolytic cleavage to 5'-phosphomonoester.. In terms of biological role, digests double-stranded RNA. Involved in the processing of primary rRNA transcript to yield the immediate precursors to the large and small rRNAs (23S and 16S). Processes some mRNAs, and tRNAs when they are encoded in the rRNA operon. Processes pre-crRNA and tracrRNA of type II CRISPR loci if present in the organism. The chain is Ribonuclease 3 from Neisseria gonorrhoeae (strain NCCP11945).